A 399-amino-acid polypeptide reads, in one-letter code: Cytochrome P450 FAS1 (399 aa).

Cys-349 serves as a coordination point for heme.

This sequence belongs to the cytochrome P450 family. It depends on heme as a cofactor.

It localises to the cytoplasm. Its function is as follows. May be involved in the biosynthesis of cytokinin phytohormones and in host plant fasciation (leafy gall). This Rhodococcoides fascians (Rhodococcus fascians) protein is Cytochrome P450 FAS1 (fas1).